We begin with the raw amino-acid sequence, 296 residues long: Urease accessory protein UreD (296 aa).

It belongs to the UreD family. As to quaternary structure, ureD, UreF and UreG form a complex that acts as a GTP-hydrolysis-dependent molecular chaperone, activating the urease apoprotein by helping to assemble the nickel containing metallocenter of UreC. The UreE protein probably delivers the nickel.

It localises to the cytoplasm. Functionally, required for maturation of urease via the functional incorporation of the urease nickel metallocenter. In Synechococcus sp. (strain CC9311), this protein is Urease accessory protein UreD.